A 466-amino-acid chain; its full sequence is MRPMRAGAGAAGESCKDDGVRPDDVSRLTADAVVRRVALLAVHTSPLAQPGTGDAGGMNVYVLQSALHLAKRGIEVEIFTRATASADPPVVRVAPGVLVRNVVAGPFEGLDKYDLPTQLCAFAAGVLRAEAAHEPGHYDIVHSHYWLSGQVGWLARDRWAVPLVHTAHTLAAVKNAALANGDAPEPPLRTVGEQQVVDEADRLIVNTDDEAKQLISIHRADPARIDVVHPGVDLEVFRPGDRQQARTALGLRPEEKVVAFVGRIQPLKAPDIVLRAVAKLPGVRIIVAGGPSGSGLASPDGLAQLADELGIAERVTFLPPQSRTDLARVFHAVDLVAIPSYSESFGLVAVEAQACGTPVVAAAVGGLPVAVRDGVSGTLVSGHDVDQWAAAIDGLLRSNAGAQGALMSRAAAEHAATFSWENTTDALLASYRRAIGDFTAGRRRKVRDPVAARKPRRWTARRGVGA.

Low complexity predominate over residues 1–12 (MRPMRAGAGAAG). The disordered stretch occupies residues 1-22 (MRPMRAGAGAAGESCKDDGVRP). 1D-myo-inositol 3-phosphate is bound at residue His-43. Residues 49–50 (QP) and Gly-57 each bind UDP-N-acetyl-alpha-D-glucosamine. 1D-myo-inositol 3-phosphate-binding positions include 54–59 (DAGGMN), Lys-112, Tyr-145, Thr-169, and Arg-189. UDP-N-acetyl-alpha-D-glucosamine contacts are provided by Arg-263, Lys-268, and Gln-321. Residues Phe-330, His-331, and Val-333 each contribute to the Mg(2+) site. Positions 343 and 351 each coordinate UDP-N-acetyl-alpha-D-glucosamine. Thr-357 lines the Mg(2+) pocket. The disordered stretch occupies residues 446-466 (VRDPVAARKPRRWTARRGVGA).

The protein belongs to the glycosyltransferase group 1 family. MshA subfamily. In terms of assembly, homodimer.

It catalyses the reaction 1D-myo-inositol 3-phosphate + UDP-N-acetyl-alpha-D-glucosamine = 1D-myo-inositol 2-acetamido-2-deoxy-alpha-D-glucopyranoside 3-phosphate + UDP + H(+). Its function is as follows. Catalyzes the transfer of a N-acetyl-glucosamine moiety to 1D-myo-inositol 3-phosphate to produce 1D-myo-inositol 2-acetamido-2-deoxy-glucopyranoside 3-phosphate in the mycothiol biosynthesis pathway. This Mycobacterium marinum (strain ATCC BAA-535 / M) protein is D-inositol 3-phosphate glycosyltransferase.